We begin with the raw amino-acid sequence, 162 residues long: Large ribosomal subunit protein uL15 (162 aa).

A compositionally biased stretch (basic and acidic residues) spans 1–13 (MKLNEIRDNEGAT). The segment at 1-37 (MKLNEIRDNEGATKNRMRVGRGIGSGKGKTAGRGVKG) is disordered. Gly residues predominate over residues 21-35 (RGIGSGKGKTAGRGV).

The protein belongs to the universal ribosomal protein uL15 family. In terms of assembly, part of the 50S ribosomal subunit.

In terms of biological role, binds to the 23S rRNA. This chain is Large ribosomal subunit protein uL15, found in Methylobacterium nodulans (strain LMG 21967 / CNCM I-2342 / ORS 2060).